The sequence spans 200 residues: Recombination protein RecR (200 aa).

The C4-type zinc-finger motif lies at 59 to 74; it reads CDICGNVCETSPCPVC. Residues 82–177 enclose the Toprim domain; it reads SVICVVEEPK…KVTRLASGLP (96 aa).

It belongs to the RecR family.

Functionally, may play a role in DNA repair. It seems to be involved in an RecBC-independent recombinational process of DNA repair. It may act with RecF and RecO. This chain is Recombination protein RecR, found in Bifidobacterium adolescentis (strain ATCC 15703 / DSM 20083 / NCTC 11814 / E194a).